We begin with the raw amino-acid sequence, 181 residues long: Alkyl hydroperoxide reductase AhpD (181 aa).

Cys131 (proton donor) is an active-site residue. A disulfide bridge links Cys131 with Cys134. Cys134 (cysteine sulfenic acid (-SOH) intermediate) is an active-site residue.

The protein belongs to the AhpD family.

The catalysed reaction is N(6)-[(R)-dihydrolipoyl]-L-lysyl-[lipoyl-carrier protein] + a hydroperoxide = N(6)-[(R)-lipoyl]-L-lysyl-[lipoyl-carrier protein] + an alcohol + H2O. Its function is as follows. Antioxidant protein with alkyl hydroperoxidase activity. Required for the reduction of the AhpC active site cysteine residues and for the regeneration of the AhpC enzyme activity. The sequence is that of Alkyl hydroperoxide reductase AhpD from Azorhizobium caulinodans (strain ATCC 43989 / DSM 5975 / JCM 20966 / LMG 6465 / NBRC 14845 / NCIMB 13405 / ORS 571).